The following is a 337-amino-acid chain: Phosphoribosylformylglycinamidine cyclo-ligase (337 aa).

It belongs to the AIR synthase family.

The protein resides in the cytoplasm. It carries out the reaction 2-formamido-N(1)-(5-O-phospho-beta-D-ribosyl)acetamidine + ATP = 5-amino-1-(5-phospho-beta-D-ribosyl)imidazole + ADP + phosphate + H(+). It participates in purine metabolism; IMP biosynthesis via de novo pathway; 5-amino-1-(5-phospho-D-ribosyl)imidazole from N(2)-formyl-N(1)-(5-phospho-D-ribosyl)glycinamide: step 2/2. This chain is Phosphoribosylformylglycinamidine cyclo-ligase, found in Pseudothermotoga lettingae (strain ATCC BAA-301 / DSM 14385 / NBRC 107922 / TMO) (Thermotoga lettingae).